A 79-amino-acid polypeptide reads, in one-letter code: Succinate dehydrogenase assembly factor 1, mitochondrial (79 aa).

This sequence belongs to the complex I LYR family. SDHAF1 subfamily. Interacts with sdh2 within an sdh1-sdh2 subcomplex.

Its subcellular location is the mitochondrion matrix. Its function is as follows. Plays an essential role in the assembly of succinate dehydrogenase (SDH), an enzyme complex (also referred to as respiratory complex II) that is a component of both the tricarboxylic acid (TCA) cycle and the mitochondrial electron transport chain, and which couples the oxidation of succinate to fumarate with the reduction of ubiquinone (coenzyme Q) to ubiquinol. Promotes maturation of the iron-sulfur protein subunit sdh2 of the SDH catalytic dimer, protecting it from the deleterious effects of oxidants. May act together with SDHAF3. The protein is Succinate dehydrogenase assembly factor 1, mitochondrial of Schizosaccharomyces pombe (strain 972 / ATCC 24843) (Fission yeast).